The primary structure comprises 153 residues: UPAR/Ly6 domain-containing protein cold (153 aa).

The signal sequence occupies residues 1 to 25; it reads MKSWEIAVVLVAAVYLCSQVNFVAG. Topologically, residues 26 to 130 are extracellular; the sequence is LECYVCSNQT…FVISGAPSRQ (105 aa). Disulfide bonds link cysteine 28/cysteine 55, cysteine 31/cysteine 41, cysteine 48/cysteine 81, cysteine 87/cysteine 112, cysteine 99/cysteine 109, and cysteine 113/cysteine 118. The N-linked (GlcNAc...) asparagine glycan is linked to asparagine 33. Serine 124 carries GPI-anchor amidated serine lipidation. Residues 125 to 153 constitute a propeptide, removed in mature form; it reads GAPSRQGYGVCLTLLTALLGLGSWLIPRS. A helical transmembrane segment spans residues 131 to 151; that stretch reads GYGVCLTLLTALLGLGSWLIP. Residues 152 to 153 lie on the Cytoplasmic side of the membrane; that stretch reads RS.

Belongs to the snake toxin-like superfamily. Post-translationally, GPI-anchored. As to expression, expressed in all tissues that form septate junctions, including hindgut, trachea, epidermis and dorsal pouch. Expressed in subperineurial glial cells that form the hemolymph-brain barrier of the central nervous system.

The protein resides in the endosome membrane. Its subcellular location is the endoplasmic reticulum membrane. It localises to the cell membrane. It is found in the cell junction. The protein localises to the septate junction. Its function is as follows. Required for septate junction assembly, possibly by organizing the preassembly and transport of septate junction proteins such as dlg1/disks large 1 and Nrx-IV/Neurexin-IV. Involved in paracellular barrier functions of trachea, hindgut and salivary gland mediated by epithelial cell septate junctions. Involved in paracellular barrier functions of the hemolymph-brain barrier (insect blood-brain barrier) mediated by glial cell septate junctions. Required for maintenance of septate junctions in imaginal disk epithelial cells. Involved in the epithelial cell wound-healing response. Directly or indirectly mediates cell-cell adhesion during septate junction formation. The chain is UPAR/Ly6 domain-containing protein cold from Drosophila melanogaster (Fruit fly).